The sequence spans 110 residues: Chloride intracellular channel protein 1 (110 aa).

N-acetylalanine is present on A2. Residues 2–90 (AEEQPQVELF…EEFLEAVLCP (89 aa)) form a required for insertion into the membrane region. At K13 the chain carries N6-acetyllysine. Positions 24–27 (CPFS) match the G-site motif. Residues C24 and C59 are joined by a disulfide bond. The chain crosses the membrane as a helical span at residues 26–46 (FSQRLFMVLWLKGVTFNVTTV).

The protein belongs to the chloride channel CLIC family. In terms of assembly, monomer. Homodimer (in vitro). Interacts with TRAPPC2. Dimerization requires a conformation change that leads to the exposure of a large hydrophobic surface. In vivo, this may lead to membrane insertion.

It localises to the nucleus. The protein localises to the nucleus membrane. Its subcellular location is the cytoplasm. The protein resides in the cell membrane. It is found in the endoplasmic reticulum. The enzyme catalyses L-dehydroascorbate + 2 glutathione = glutathione disulfide + L-ascorbate. It catalyses the reaction chloride(in) = chloride(out). It carries out the reaction iodide(out) = iodide(in). The catalysed reaction is thiocyanate(in) = thiocyanate(out). The enzyme catalyses nitrate(in) = nitrate(out). It catalyses the reaction bromide(in) = bromide(out). It carries out the reaction fluoride(in) = fluoride(out). In the soluble state, catalyzes glutaredoxin-like thiol disulfide exchange reactions with reduced glutathione as electron donor. Reduces selenite and dehydroascorbate and may act as an antioxidant during oxidative stress response. Can insert into membranes and form voltage-dependent multi-ion conductive channels. Membrane insertion seems to be redox-regulated and may occur only under oxidizing conditions. Involved in regulation of the cell cycle. The polypeptide is Chloride intracellular channel protein 1 (CLIC1) (Sus scrofa (Pig)).